The primary structure comprises 689 residues: PR domain zinc finger protein 8 (689 aa).

The 116-residue stretch at 16–131 (KAVQQCLTDI…KDEELLVWYG (116 aa)) folds into the SET domain. Residue Tyr130 participates in S-adenosyl-L-methionine binding. The segment at 155–183 (YTCLECSQRFQFEFPYVAHLRFRCPKRLH) adopts a C2H2-type 1 zinc-finger fold. Disordered regions lie at residues 185-333 (ADIS…VGGR) and 397-506 (SLQE…QPAR). The span at 193–210 (QGGGVGTKDHGGGGGGGK) shows a compositional bias: gly residues. Composition is skewed to low complexity over residues 241–258 (PESS…AKPS) and 273–286 (GGSS…LSSG). The segment covering 322-333 (EGGGGAGLVGGR) has biased composition (gly residues). Positions 423 to 433 (STPAAASPVGA) are enriched in low complexity. Residues 472–491 (TSGGGGTGAGAAGGAGGGQG) show a composition bias toward gly residues. C2H2-type zinc fingers lie at residues 625–648 (NWCA…RSHH) and 666–688 (LKCP…MTSH).

Belongs to the class V-like SAM-binding methyltransferase superfamily. As to quaternary structure, interacts with EPM2A and NHLRC1. This interaction sequesters EPM2A and NHLRC1 to the nucleus. Interacts with BHLHE22. Expressed in brain, heart, skeletal muscle, testes, prostate.

It is found in the nucleus. In terms of biological role, probable histone methyltransferase, preferentially acting on 'Lys-9' of histone H3. Involved in the control of steroidogenesis through transcriptional repression of steroidogenesis marker genes such as CYP17A1 and LHCGR. Forms with BHLHE22 a transcriptional repressor complex controlling genes involved in neural development and neuronal differentiation. In the retina, it is required for rod bipolar and type 2 OFF-cone bipolar cell survival. The polypeptide is PR domain zinc finger protein 8 (PRDM8) (Homo sapiens (Human)).